The sequence spans 239 residues: Isoprenyl transferase (239 aa).

Residue Asp16 is part of the active site. Asp16 is a Mg(2+) binding site. Substrate contacts are provided by residues Gly17–Arg20, Trp21, Arg29, His33, and Ser61–Glu63. The active-site Proton acceptor is the Asn64. Substrate-binding positions include Trp65, Arg67, Arg187, and Arg193–Ser195. Glu206 is a Mg(2+) binding site.

Belongs to the UPP synthase family. In terms of assembly, homodimer. It depends on Mg(2+) as a cofactor.

Its function is as follows. Catalyzes the condensation of isopentenyl diphosphate (IPP) with allylic pyrophosphates generating different type of terpenoids. This chain is Isoprenyl transferase, found in Lactobacillus johnsonii (strain CNCM I-12250 / La1 / NCC 533).